The primary structure comprises 399 residues: Acetate kinase (399 aa).

Residue asparagine 7 coordinates Mg(2+). Residue lysine 14 participates in ATP binding. Arginine 90 serves as a coordination point for substrate. Aspartate 147 acts as the Proton donor/acceptor in catalysis. Residues histidine 207–glycine 211, aspartate 282–arginine 284, and glycine 330–asparagine 334 contribute to the ATP site. Glutamate 385 contributes to the Mg(2+) binding site.

This sequence belongs to the acetokinase family. In terms of assembly, homodimer. Mg(2+) serves as cofactor. Requires Mn(2+) as cofactor.

The protein resides in the cytoplasm. The enzyme catalyses acetate + ATP = acetyl phosphate + ADP. It functions in the pathway metabolic intermediate biosynthesis; acetyl-CoA biosynthesis; acetyl-CoA from acetate: step 1/2. Catalyzes the formation of acetyl phosphate from acetate and ATP. Can also catalyze the reverse reaction. The polypeptide is Acetate kinase (Caldicellulosiruptor saccharolyticus (strain ATCC 43494 / DSM 8903 / Tp8T 6331)).